The sequence spans 1205 residues: Solute carrier family 12 member 2 (1205 aa).

M1 is modified (N-acetylmethionine). Over residues 1 to 22 the composition is skewed to low complexity; the sequence is MEPGPARPRLAPAARPGWGRAA. Residues 1–102 form a disordered region; sequence MEPGPARPRL…AAAAAAAAAA (102 aa). At 1–279 the chain is on the cytoplasmic side; it reads MEPGPARPRL…AESKGVVKFG (279 aa). Over residues 23–35 the composition is skewed to basic residues; it reads GCRRRGGPARHGR. 2 positions are modified to phosphoserine: S74 and S76. The short motif at 77 to 80 is the RFXV motif 1 element; the sequence is RFQV. Residues 87–102 are compositionally biased toward low complexity; that stretch reads AGRAAAAAAAAAAAAA. Positions 133 to 136 match the RFXV motif 2 motif; that stretch reads RFRV. Over residues 143–155 the composition is skewed to low complexity; that stretch reads ASSSADDSLSDAA. The segment at 143–187 is disordered; it reads ASSSADDSLSDAAGVGGDGPNVSFQNGGDTVLSEGSSLHSGGGSG. T196, T200, T205, T210, and T223 each carry phosphothreonine. S235 carries the post-translational modification Phosphoserine. T259 is modified (phosphothreonine). A discontinuously helical membrane pass occupies residues 280–309; it reads WIKGVLVRCMLNIWGVMLFIRLSWIVGQAG. L290 provides a ligand contact to Na(+). Residues N291 and I292 each coordinate K(+). Na(+) is bound at residue W293. Chloride contacts are provided by G294, V295, and M296. Residues 310–329 traverse the membrane as a helical segment; that stretch reads IGLSVVVIAMATVVTTITGL. At 330–360 the chain is on the cytoplasmic side; sequence STSAIATNGFVRGGGAYYLISRSLGPEFGGA. Residues 361 to 388 form a helical membrane-spanning segment; that stretch reads IGLIFAFANAVAVAMYVVGFAETVVELL. A chloride-binding site is contributed by F365. Y376 lines the K(+) pocket. Over 389-398 the chain is Extracellular; it reads KEHSILMIDE. The chain crosses the membrane as a helical span at residues 399-422; the sequence is INDIRIIGAITVVILLGISVAGME. Over 423–425 the chain is Cytoplasmic; it reads WEA. The helical transmembrane segment at 426 to 447 threads the bilayer; it reads KAQIVLLVILLLAIADFVIGTF. Residues 448-479 lie on the Extracellular side of the membrane; it reads ISLESKKPKGFFGYKSEIFNENFGPDFREEET. The chain crosses the membrane as a discontinuously helical span at residues 480–497; sequence FFSVFAIFFPAATGILAG. 3 residues coordinate K(+): P489, A490, and T492. Chloride contacts are provided by P489 and A490. Positions 493 and 494 each coordinate chloride. At 498-512 the chain is on the cytoplasmic side; sequence ANISGDLADPQSAIP. The chain crosses the membrane as a helical span at residues 513-534; sequence KGTLLAILITTVVYIGIAVSVG. Topologically, residues 535–591 are extracellular; the sequence is SCVVRDATGNVNDTITTELTNCTSAACKLNFDFSYCESNTCSYGLMNNFQVMSMVSG. N546 and N555 each carry an N-linked (GlcNAc...) asparagine glycan. Cystine bridges form between C556–C561 and C570–C575. A helical membrane pass occupies residues 592-616; the sequence is FAPLISAGIFSATLSSALASLVSAP. 3 residues coordinate Na(+): A603, S606, and S607. Topologically, residues 617–644 are cytoplasmic; it reads KIFQALCKDNIYPAFQMFAKGYGKNNEP. The next 2 helical transmembrane spans lie at 645-665 and 666-684; these read LRGY…AELN and VIAP…LINF. Residues F675 and Y679 each coordinate chloride. The Cytoplasmic segment spans residues 685-707; it reads SVFHASLAKSPGWRPAFKYYNMW. A run of 2 helical transmembrane segments spans residues 708–725 and 726–738; these read ISLI…VINW and WAAL…VLGL. Residues 739-1205 are Cytoplasmic-facing; the sequence is YIYVTYKKPD…NHQSVLTFYS (467 aa). The tract at residues 754–771 is scissor helix; that stretch reads STQALTYLSALQHSIRLS. A phosphoserine mark is found at S933 and S937. The interval 953-986 is disordered; it reads SDQDTCKSSGEKSITQKDEEEDGKTPTQPLLKKE. S987 is subject to Phosphoserine.

This sequence belongs to the SLC12A transporter family. In terms of assembly, homodimer; adopts a domain-swap conformation at the scissor helices connecting the transmembrane domain and C-terminal domain. Phosphorylated at Thr-196, Thr-200 and Thr-205 by OXSR1/OSR1 and STK39/SPAK downstream of WNK kinases (WNK1, WNK2, WNK3 or WNK4), promoting its activity. In terms of tissue distribution, widely expressed. High expression found in the cochlea, cochlear lateral wall, and the choroid plexus. Lower expression found in the cerebellum and the cortex.

The protein resides in the basolateral cell membrane. It carries out the reaction K(+)(out) + 2 chloride(out) + Na(+)(out) = K(+)(in) + 2 chloride(in) + Na(+)(in). Its activity is regulated as follows. Activated following phosphorylation by OXSR1/OSR1 and STK39/SPAK downstream of WNK kinases (WNK1, WNK2, WNK3 or WNK4). Inhibited by bumetanide and furosemide. In terms of biological role, cation-chloride cotransporter which mediates the electroneutral transport of chloride, potassium and/or sodium ions across the membrane. Plays a vital role in the regulation of ionic balance and cell volume. The sequence is that of Solute carrier family 12 member 2 (Slc12a2) from Mus musculus (Mouse).